The chain runs to 422 residues: Histidine--tRNA ligase (422 aa).

This sequence belongs to the class-II aminoacyl-tRNA synthetase family. As to quaternary structure, homodimer.

Its subcellular location is the cytoplasm. The enzyme catalyses tRNA(His) + L-histidine + ATP = L-histidyl-tRNA(His) + AMP + diphosphate + H(+). This is Histidine--tRNA ligase from Alcanivorax borkumensis (strain ATCC 700651 / DSM 11573 / NCIMB 13689 / SK2).